A 123-amino-acid chain; its full sequence is Small ribosomal subunit protein uS12 (123 aa).

A disordered region spans residues 1 to 26; it reads MPTLNQLVRKPRKRPVAKSKVPALDA. Asp-89 carries the post-translational modification 3-methylthioaspartic acid. The tract at residues 104–123 is disordered; sequence TAGVKNRKQSRSKYGAKRPK. A compositionally biased stretch (basic residues) spans 108 to 123; the sequence is KNRKQSRSKYGAKRPK.

The protein belongs to the universal ribosomal protein uS12 family. As to quaternary structure, part of the 30S ribosomal subunit. Contacts proteins S8 and S17. May interact with IF1 in the 30S initiation complex.

Functionally, with S4 and S5 plays an important role in translational accuracy. Its function is as follows. Interacts with and stabilizes bases of the 16S rRNA that are involved in tRNA selection in the A site and with the mRNA backbone. Located at the interface of the 30S and 50S subunits, it traverses the body of the 30S subunit contacting proteins on the other side and probably holding the rRNA structure together. The combined cluster of proteins S8, S12 and S17 appears to hold together the shoulder and platform of the 30S subunit. The chain is Small ribosomal subunit protein uS12 from Acidithiobacillus ferrooxidans (strain ATCC 23270 / DSM 14882 / CIP 104768 / NCIMB 8455) (Ferrobacillus ferrooxidans (strain ATCC 23270)).